The following is a 58-amino-acid chain: Ribosome modulation factor (58 aa).

Belongs to the ribosome modulation factor family.

It localises to the cytoplasm. Functionally, during stationary phase, converts 70S ribosomes to an inactive dimeric form (100S ribosomes). The polypeptide is Ribosome modulation factor (Shewanella amazonensis (strain ATCC BAA-1098 / SB2B)).